Consider the following 433-residue polypeptide: Eukaryotic peptide chain release factor subunit 1 (433 aa).

Residue Gln182 is modified to N5-methylglutamine. Ser425 carries the phosphoserine modification.

Belongs to the eukaryotic release factor 1 family. Component of the eRF1-eRF3-GTP ternary complex, composed of sup45/eRF1, sup35/eRF3 and GTP.

The protein localises to the cytoplasm. Component of the eRF1-eRF3-GTP ternary complex, a ternary complex that mediates translation termination in response to the termination codons. The eRF1-eRF3-GTP complex binds to a stop codon in the ribosomal A-site. Sup45/eRF1 is responsible for stop codon recognition and inducing hydrolysis of peptidyl-tRNA. Following GTP hydrolysis by sup35/eRF3, sup35/eRF3 dissociates, permitting sup45/eRF1 to accommodate fully in the A-site. The sequence is that of Eukaryotic peptide chain release factor subunit 1 (sup45) from Schizosaccharomyces pombe (strain 972 / ATCC 24843) (Fission yeast).